Consider the following 208-residue polypeptide: Ribosomal RNA small subunit methyltransferase G (208 aa).

S-adenosyl-L-methionine-binding positions include glycine 73, leucine 78, 124–125 (VE), and arginine 139.

It belongs to the methyltransferase superfamily. RNA methyltransferase RsmG family.

The protein resides in the cytoplasm. The catalysed reaction is guanosine(527) in 16S rRNA + S-adenosyl-L-methionine = N(7)-methylguanosine(527) in 16S rRNA + S-adenosyl-L-homocysteine. Functionally, specifically methylates the N7 position of guanine in position 527 of 16S rRNA. The chain is Ribosomal RNA small subunit methyltransferase G from Aeromonas salmonicida (strain A449).